A 125-amino-acid chain; its full sequence is Large ribosomal subunit protein bL20 (125 aa).

This sequence belongs to the bacterial ribosomal protein bL20 family.

In terms of biological role, binds directly to 23S ribosomal RNA and is necessary for the in vitro assembly process of the 50S ribosomal subunit. It is not involved in the protein synthesizing functions of that subunit. This chain is Large ribosomal subunit protein bL20, found in Thermobifida fusca (strain YX).